Consider the following 117-residue polypeptide: Biogenesis of lysosome-related organelles complex 1 subunit BLS1 (117 aa).

The tract at residues 97–117 (EGKAQDTEQAPGKGDRIFRSD) is disordered.

It belongs to the BLOC1S1 family. As to quaternary structure, component of the biogenesis of lysosome-related organelles complex-1 (BLOC-1).

It localises to the endosome. Its function is as follows. Component of the biogenesis of lysosome-related organelles complex-1 (BLOC-1), a complex involved in endosomal cargo sorting. The sequence is that of Biogenesis of lysosome-related organelles complex 1 subunit BLS1 (BLS1) from Eremothecium gossypii (strain ATCC 10895 / CBS 109.51 / FGSC 9923 / NRRL Y-1056) (Yeast).